The primary structure comprises 1795 residues: Protein TIC 214 (1795 aa).

Transmembrane regions (helical) follow at residues 19 to 39 (IINS…FSIG), 68 to 88 (FIAG…HLAL), 91 to 111 (PHTI…WNNH), 133 to 153 (VFLN…SSML), 176 to 196 (VGWL…LVWI), and 227 to 247 (IFSI…PSPI). Residues 1490–1517 (EKESTGQVEFESDKEQQRNSESALSNQE) form a disordered region. Polar residues predominate over residues 1508 to 1517 (NSESALSNQE).

The protein belongs to the TIC214 family. In terms of assembly, part of the Tic complex.

It localises to the plastid. The protein resides in the chloroplast inner membrane. Involved in protein precursor import into chloroplasts. May be part of an intermediate translocation complex acting as a protein-conducting channel at the inner envelope. This is Protein TIC 214 from Crucihimalaya wallichii (Rock-cress).